Consider the following 139-residue polypeptide: Nucleoside diphosphate kinase (139 aa).

The ATP site is built by lysine 10, phenylalanine 58, arginine 86, threonine 92, arginine 103, and asparagine 113. Catalysis depends on histidine 116, which acts as the Pros-phosphohistidine intermediate.

It belongs to the NDK family. Homotetramer. Mg(2+) is required as a cofactor.

It is found in the cytoplasm. The enzyme catalyses a 2'-deoxyribonucleoside 5'-diphosphate + ATP = a 2'-deoxyribonucleoside 5'-triphosphate + ADP. It carries out the reaction a ribonucleoside 5'-diphosphate + ATP = a ribonucleoside 5'-triphosphate + ADP. Major role in the synthesis of nucleoside triphosphates other than ATP. The ATP gamma phosphate is transferred to the NDP beta phosphate via a ping-pong mechanism, using a phosphorylated active-site intermediate. The sequence is that of Nucleoside diphosphate kinase from Nitratidesulfovibrio vulgaris (strain DSM 19637 / Miyazaki F) (Desulfovibrio vulgaris).